A 250-amino-acid chain; its full sequence is Pyrroloquinoline-quinone synthase (250 aa).

This sequence belongs to the PqqC family.

The catalysed reaction is 6-(2-amino-2-carboxyethyl)-7,8-dioxo-1,2,3,4,7,8-hexahydroquinoline-2,4-dicarboxylate + 3 O2 = pyrroloquinoline quinone + 2 H2O2 + 2 H2O + H(+). It participates in cofactor biosynthesis; pyrroloquinoline quinone biosynthesis. Functionally, ring cyclization and eight-electron oxidation of 3a-(2-amino-2-carboxyethyl)-4,5-dioxo-4,5,6,7,8,9-hexahydroquinoline-7,9-dicarboxylic-acid to PQQ. The protein is Pyrroloquinoline-quinone synthase of Pseudomonas aeruginosa (strain LESB58).